Here is a 206-residue protein sequence, read N- to C-terminus: Thymidylate kinase (206 aa).

10–17 (GIDGAGKS) contacts ATP.

It belongs to the thymidylate kinase family.

The enzyme catalyses dTMP + ATP = dTDP + ADP. Its function is as follows. Phosphorylation of dTMP to form dTDP in both de novo and salvage pathways of dTTP synthesis. In Neisseria meningitidis serogroup A / serotype 4A (strain DSM 15465 / Z2491), this protein is Thymidylate kinase (tmk).